We begin with the raw amino-acid sequence, 2539 residues long: Zinc finger FYVE domain-containing protein 26 (2539 aa).

Phosphoserine occurs at positions 297, 615, 619, and 703. Disordered stretches follow at residues His-594–Val-637, Ile-699–Ser-724, and Trp-738–Ala-806. A compositionally biased stretch (basic residues) spans Pro-764–Arg-774. Positions Ser-787–Ser-805 are enriched in low complexity. Ser-800 is subject to Phosphoserine. Residues Met-868–Gly-895 adopt a coiled-coil conformation. Residues Asp-1267–Ser-1296 are disordered. The span at Ser-1271–Pro-1282 shows a compositional bias: polar residues. Ser-1742, Ser-1764, Ser-1780, and Ser-1782 each carry phosphoserine. Residues Ala-1754–Gln-1808 are disordered. A compositionally biased stretch (low complexity) spans Pro-1760–Pro-1769. The FYVE-type zinc-finger motif lies at Asp-1812 to Asn-1872. Zn(2+)-binding residues include Cys-1818, Cys-1821, Cys-1835, Cys-1838, Cys-1843, Cys-1846, Cys-1864, and Cys-1867.

In terms of assembly, interacts with AP5Z1, AP5B1, AP5S1 and SPG11. Interacts with TTC19 and KIF13A. Strongest expression in the adrenal gland, bone marrow, adult brain, fetal brain, lung, placenta, prostate, skeletal muscle, testis, thymus, and retina. Intermediate levels are detected in other structures, including the spinal cord.

The protein localises to the cytoplasm. The protein resides in the cytoskeleton. Its subcellular location is the microtubule organizing center. It is found in the centrosome. It localises to the midbody. Phosphatidylinositol 3-phosphate-binding protein required for the abscission step in cytokinesis: recruited to the midbody during cytokinesis and acts as a regulator of abscission. May also be required for efficient homologous recombination DNA double-strand break repair. This is Zinc finger FYVE domain-containing protein 26 (ZFYVE26) from Homo sapiens (Human).